The chain runs to 232 residues: Phosphoribosylaminoimidazole-succinocarboxamide synthase (232 aa).

This sequence belongs to the SAICAR synthetase family.

It catalyses the reaction 5-amino-1-(5-phospho-D-ribosyl)imidazole-4-carboxylate + L-aspartate + ATP = (2S)-2-[5-amino-1-(5-phospho-beta-D-ribosyl)imidazole-4-carboxamido]succinate + ADP + phosphate + 2 H(+). Its pathway is purine metabolism; IMP biosynthesis via de novo pathway; 5-amino-1-(5-phospho-D-ribosyl)imidazole-4-carboxamide from 5-amino-1-(5-phospho-D-ribosyl)imidazole-4-carboxylate: step 1/2. This chain is Phosphoribosylaminoimidazole-succinocarboxamide synthase, found in Finegoldia magna (strain ATCC 29328 / DSM 20472 / WAL 2508) (Peptostreptococcus magnus).